The following is a 98-amino-acid chain: Transcription elongation factor A protein-like 7 (98 aa).

A compositionally biased stretch (basic and acidic residues) spans 1 to 24; the sequence is MQRSCNEKEGKPKCSEPKREEEHP. Residues 1–31 form a disordered region; that stretch reads MQRSCNEKEGKPKCSEPKREEEHPYGAFEGQ. A coiled-coil region spans residues 59 to 89; that stretch reads GEEMTGEEEEMERCLEEIRSLRKKFRALHSN.

Belongs to the TFS-II family. TFA subfamily.

The protein resides in the nucleus. Plays a role in the negative regulation of NF-kappa-B signaling at the basal level by modulating transcriptional activity of NF-kappa-B on its target gene promoters. Associates with cyclin D1 promoter containing Myc E-box sequence and transcriptionally represses cyclin D1 expression. Regulates telomerase reverse transcriptase expression and telomerase activity in both ALT (alternative lengthening of telomeres)and telomerase-positive cell lines. The polypeptide is Transcription elongation factor A protein-like 7 (Tceal7) (Rattus norvegicus (Rat)).